A 266-amino-acid polypeptide reads, in one-letter code: Nickel import ATP-binding protein NikE (266 aa).

An ABC transporter domain is found at 4-252 (ISADNIVKIY…RHPASRLLRE (249 aa)). 45 to 52 (GRSGCGKS) is a binding site for ATP.

This sequence belongs to the ABC transporter superfamily. Nickel importer (TC 3.A.1.5.3) family. The complex is composed of two ATP-binding proteins (NikD and NikE), two transmembrane proteins (NikB and NikC) and a solute-binding protein (NikA).

The protein resides in the cell inner membrane. The catalysed reaction is Ni(2+)(out) + ATP + H2O = Ni(2+)(in) + ADP + phosphate + H(+). In terms of biological role, part of the ABC transporter complex NikABCDE involved in nickel import. Responsible for energy coupling to the transport system. The sequence is that of Nickel import ATP-binding protein NikE from Brucella suis biovar 1 (strain 1330).